The primary structure comprises 700 residues: Elongation factor G (700 aa).

Positions 10-285 (DRTRNIGIMA…AVIDYLPSPL (276 aa)) constitute a tr-type G domain. Residues 19 to 26 (AHIDAGKT), 83 to 87 (DTPGH), and 137 to 140 (NKMD) each bind GTP.

The protein belongs to the TRAFAC class translation factor GTPase superfamily. Classic translation factor GTPase family. EF-G/EF-2 subfamily.

It is found in the cytoplasm. Catalyzes the GTP-dependent ribosomal translocation step during translation elongation. During this step, the ribosome changes from the pre-translocational (PRE) to the post-translocational (POST) state as the newly formed A-site-bound peptidyl-tRNA and P-site-bound deacylated tRNA move to the P and E sites, respectively. Catalyzes the coordinated movement of the two tRNA molecules, the mRNA and conformational changes in the ribosome. In Lacticaseibacillus casei (strain BL23) (Lactobacillus casei), this protein is Elongation factor G.